We begin with the raw amino-acid sequence, 206 residues long: Endoplasmic reticulum transmembrane protein 1 (206 aa).

Over 1-7 (MSLYFTT) the chain is Lumenal. A helical transmembrane segment spans residues 8–28 (LFLLLTVEMVMLFIFVLPLPF). The Cytoplasmic portion of the chain corresponds to 29–45 (RIRRGIFSTYNQLTAKQ). The helical transmembrane segment at 46-66 (QIKTIIFITGCLVGLLFIDSW) threads the bilayer. The Lumenal segment spans residues 67–104 (KRSQIRVSLYHNDNSGSIGSSAVTPIQALASRAYNQRN). A helical transmembrane segment spans residues 105–125 (MYISGFILYFSICIPTVMSIV). Topologically, residues 126-206 (KRLVKYQGLI…AAAEASKKGN (81 aa)) are cytoplasmic. Residues 140–163 (KQKLNKPSSNSKKDSNEADSTKLQ) are disordered. Residues 150-163 (SKKDSNEADSTKLQ) are compositionally biased toward basic and acidic residues. A Glycyl lysine isopeptide (Lys-Gly) (interchain with G-Cter in ubiquitin) cross-link involves residue lysine 190. A Di-lysine motif motif is present at residues 203-206 (KKGN).

This sequence belongs to the BCAP29/BCAP31 family.

Its subcellular location is the endoplasmic reticulum membrane. Its function is as follows. May play a role in anterograde transport of membrane proteins from the endoplasmic reticulum to the Golgi. The polypeptide is Endoplasmic reticulum transmembrane protein 1 (YET1) (Saccharomyces cerevisiae (strain ATCC 204508 / S288c) (Baker's yeast)).